The primary structure comprises 476 residues: UDP-N-acetylmuramate--L-alanine ligase (476 aa).

Gly-112–Thr-118 lines the ATP pocket.

It belongs to the MurCDEF family.

Its subcellular location is the cytoplasm. It catalyses the reaction UDP-N-acetyl-alpha-D-muramate + L-alanine + ATP = UDP-N-acetyl-alpha-D-muramoyl-L-alanine + ADP + phosphate + H(+). It functions in the pathway cell wall biogenesis; peptidoglycan biosynthesis. Cell wall formation. This chain is UDP-N-acetylmuramate--L-alanine ligase, found in Magnetococcus marinus (strain ATCC BAA-1437 / JCM 17883 / MC-1).